The sequence spans 630 residues: MGSHEQTADVTGQRFAALALAALGVVYGDIGTSPLYAVKEVFAGNHPIPVTMLNIYGSLSLIFWALVIVVSVKYVTFIMRADNRGEGGIMALIALALHTVHDKPQHAKWIMIVGVLGAAMFYGDGMVTPAMSVLSAVEGLEVATPALKPFVIPLTMVVLFILFFVQRSGTATVGAFFGPVMLVWFSALALLGVHNIVDHPAILMALNPAYGIEFLLENKAHSLVAMGNVVLAVTGAEALYADMGHFGRKPISRAWFAFVLPALVLNYFGQGALILGDPEAAKNPFFLSAPDWALYPLVGLATLATVIASQAVISGAFSVTRQAMQLGFVPRMEVQYTSDREQGQIYLPAVNWGLMVAVMILVLGFRSSNNLAAAYGIAVTGDMVITSILATVVVAKVWKWGWFKAGLLFACFLSVELVFLAANILKIPDGGWFPLVAGMGVFVLMTTWKRGRQLLSDRLRGERLELSMFLDSLASSMPTRVAGTAVFLNADPKGVPHALLHNLMHNKVLHERVVLLSVQFFDVPYVPDIDLVEVRQLKENFWSVVIQYGFKDIPNVPEALALCADAGLAFSSLETSYFIGRETLIPRLGSEMAFWREKIFVAMFRNAGSATAFFKIPSNRVVELGTQVVL.

The next 12 membrane-spanning stretches (helical) occupy residues 15–35 (FAAL…TSPL), 59–79 (LSLI…TFIM), 109–129 (WIMI…MVTP), 145–165 (PALK…LFFV), 173–193 (VGAF…LLGV), 223–243 (LVAM…YADM), 255–275 (WFAF…ALIL), 297–317 (LVGL…SGAF), 345–365 (IYLP…VLGF), 374–394 (AYGI…TVVV), 405–425 (AGLL…ANIL), and 427–447 (IPDG…LMTT).

It belongs to the HAK/KUP transporter (TC 2.A.72) family.

Its subcellular location is the cell inner membrane. It catalyses the reaction K(+)(in) + H(+)(in) = K(+)(out) + H(+)(out). Functionally, transport of potassium into the cell. Likely operates as a K(+):H(+) symporter. This is Probable potassium transport system protein Kup 1 from Dechloromonas aromatica (strain RCB).